We begin with the raw amino-acid sequence, 102 residues long: Small ribosomal subunit protein uS10 (102 aa).

This sequence belongs to the universal ribosomal protein uS10 family. In terms of assembly, part of the 30S ribosomal subunit.

Functionally, involved in the binding of tRNA to the ribosomes. This chain is Small ribosomal subunit protein uS10, found in Beijerinckia indica subsp. indica (strain ATCC 9039 / DSM 1715 / NCIMB 8712).